The chain runs to 387 residues: Early growth response protein 3 (387 aa).

Residues 241 to 283 (PGFGSLPQPPLTLKPIRPRKYPNRPSKTPLHERPHACPAEGCD) form a disordered region. Residues 269–283 (PLHERPHACPAEGCD) show a composition bias toward basic and acidic residues. 3 consecutive C2H2-type zinc fingers follow at residues 275–299 (HACP…LRIH), 305–327 (FQCR…IRTH), and 333–355 (FACE…AKIH). A disordered region spans residues 348-387 (RKRHAKIHLKQKEKKAEKGGAPSASSAPPVSLAPVVTTCA). Basic residues predominate over residues 350–360 (RHAKIHLKQKE). The segment covering 368 to 387 (APSASSAPPVSLAPVVTTCA) has biased composition (low complexity).

Belongs to the EGR C2H2-type zinc-finger protein family.

It is found in the nucleus. Its function is as follows. Probable transcription factor involved in muscle spindle development. In Homo sapiens (Human), this protein is Early growth response protein 3 (EGR3).